We begin with the raw amino-acid sequence, 369 residues long: MGLFLYLLFMIVVGAFIGGMTNSLAIKMLFRPYRPIYIAGKRLPFTPGLIPKRREELAEQLGRMVVEHLLTAEGLRRKLNDPSFVQDMTSYVQEEVEKWLQSDRTVEQWLKQFGMPDPKQTAETWIETKYKTFMSQYRQRPLHEIIPIDVLHKIDHAIPSIVDRLLLRLRTYIESEQGERQIEHMINEFLQSRGMFGNMLQMFLGNVSLAEKIRPEIVKFLQSEGAKQLLVQLFINEWEKVKEMRIHEVEQIIDQEKIVVWVKRLTASIVQEPLQKPLGALVAPYVRHSLPTLVRFLLQFASERIERWMKQLHLQDIVREEVASFSVERLEEMILTISRREFKMITYLGALLGGIIGLIQGCITFFVQM.

A run of 2 helical transmembrane segments spans residues 1–21 (MGLFLYLLFMIVVGAFIGGMT) and 347–367 (YLGALLGGIIGLIQGCITFFV).

This sequence belongs to the UPF0754 family.

The protein localises to the cell membrane. The polypeptide is UPF0754 membrane protein Aflv_2299 (Anoxybacillus flavithermus (strain DSM 21510 / WK1)).